Reading from the N-terminus, the 1915-residue chain is Protein TIC 214 (1915 aa).

6 consecutive transmembrane segments (helical) span residues 18 to 38 (IINSVVVVGLYYGFLTTFSIG), 64 to 84 (FITGQLMMFISIYYAPLHLAL), 90 to 110 (ITVLVLPYLLFHFFWHNHKYF), 126 to 146 (LNIQCVFLNNLIFPLFNHFIL), 174 to 194 (VGWLIGHILFMKWVELVLIWI), and 230 to 250 (IFSILLFITCIYYLGRMPSTL). 2 disordered regions span residues 260–319 (KMKQ…EIRV) and 1566–1631 (NKNI…GSVL). Over residues 267 to 277 (SEEETDVEIET) the composition is skewed to acidic residues. A compositionally biased stretch (basic and acidic residues) spans 279–288 (SETKETKEEQ). A compositionally biased stretch (acidic residues) spans 304–315 (EKEDPDKIDETE). Residues 1587 to 1601 (KSLELENRNQEEKES) are compositionally biased toward basic and acidic residues. Positions 1602-1631 (SSQGDLGSNAQNQGNLGPNAQNQGNLGSVL) are enriched in polar residues.

The protein belongs to the TIC214 family. As to quaternary structure, part of the Tic complex.

It localises to the plastid. The protein resides in the chloroplast inner membrane. Functionally, involved in protein precursor import into chloroplasts. May be part of an intermediate translocation complex acting as a protein-conducting channel at the inner envelope. This is Protein TIC 214 from Platanus occidentalis (Sycamore).